The following is a 216-amino-acid chain: Adenylate kinase (216 aa).

11-16 (GSGKGT) contributes to the ATP binding site. The interval 31–60 (ATGDLFRKAIERGDELGDTVKSYMERGELV) is NMP. AMP is bound by residues T32, R37, 58 to 60 (ELV), 86 to 89 (GFPR), and Q93. Residues 127-163 (GRWVCRSCQSPYQCGCAEVAEGKCSRCQGELYQRPDD) form an LID region. ATP is bound at residue R128. Zn(2+) contacts are provided by C131, C134, C150, and C153. AMP-binding residues include R160 and R171. A199 serves as a coordination point for ATP.

It belongs to the adenylate kinase family. Monomer.

It is found in the cytoplasm. It carries out the reaction AMP + ATP = 2 ADP. Its pathway is purine metabolism; AMP biosynthesis via salvage pathway; AMP from ADP: step 1/1. Functionally, catalyzes the reversible transfer of the terminal phosphate group between ATP and AMP. Plays an important role in cellular energy homeostasis and in adenine nucleotide metabolism. This is Adenylate kinase from Dehalococcoides mccartyi (strain ATCC BAA-2266 / KCTC 15142 / 195) (Dehalococcoides ethenogenes (strain 195)).